The primary structure comprises 161 residues: Transcriptional repressor NrdR (161 aa).

A zinc finger lies at 3–34 (CPFCGKYDTKVTDSRLVAEGDQVRRRRQCNDC). The region spanning 49–139 (PRVIKGDGSR…VYRRFQDLDE (91 aa)) is the ATP-cone domain.

Belongs to the NrdR family. It depends on Zn(2+) as a cofactor.

Functionally, negatively regulates transcription of bacterial ribonucleotide reductase nrd genes and operons by binding to NrdR-boxes. This is Transcriptional repressor NrdR from Chromohalobacter salexigens (strain ATCC BAA-138 / DSM 3043 / CIP 106854 / NCIMB 13768 / 1H11).